A 501-amino-acid chain; its full sequence is MLPRIIPSVLSVVLLFSFLFFVTAVLLQFIRIDSPDLENEEVFHSAPYDIFIYSAFYYNKSKSLGDSSMVILMTADFEVLEKVKNLELLGINDTSRAMTSAELERVTIHDACKWIAMTATAKIVLNPSLLLVSLGGNHAPIPFEVVSSEPKPVVMCISPLFAAENWHNLLVSLHVYKIFGAHMHLYIRSIVSPMLEILRVYEQEGYATLKPWNRINLLNRDEQDFNPNLNVEFRSQAAAQTDCLLRYKESSEFVAFVDLDDLIIPRVADNYASEFRYLASEHPTVAYFTYSKENTRIKAYKRANVFSIEHVLRNIKHEQQTETGKMIAIPSKINNTWIHWPQKNLKKLAVKPEFNSITHLKHIELLDGLKSKNEEEPKYNPSTGLDNDKPLISNKNIKMIEKDFNRMSWKSSVRRHLRNLPINMTYSKLISDCYKQSYYAFHSANENHGMLCPGPERCDISNHKTRCWISVGEYHSTRDGKLINVHFAENADFALNDGCQV.

Residues 10–30 (LSVVLLFSFLFFVTAVLLQFI) form a helical membrane-spanning segment. Residues 151 to 439 (KPVVMCISPL…ISDCYKQSYY (289 aa)) form the GT92 domain.

Belongs to the glycosyltransferase 92 family.

The protein resides in the membrane. The protein is Glycosyltransferase family 92 protein F13G3.3 of Caenorhabditis elegans.